The following is a 380-amino-acid chain: E3 ubiquitin-protein ligase PHF7 (380 aa).

The disordered stretch occupies residues 1 to 23 (MRTIKEKKEHPRLRKTARTKKVT). Positions 10 to 23 (HPRLRKTARTKKVT) are enriched in basic residues. A C2HC pre-PHD-type zinc finger spans residues 30–68 (GPVCLLCFQEPGDPEKLGEFLQKDNLCVHYFCLILSSKL). Residues Cys-33, Cys-36, His-58, and Cys-61 each contribute to the Zn(2+) site. Positions 67–92 (KLPQKGQPNRGLHGFMPEDIKKEAAR) are required for interaction and ubiquitination of the nucleosome core particle. The PHD-type zinc-finger motif lies at 96–145 (KVCFVCKRKGAAIRCQKDQCVQNFHLPCGQERGCLSQFFGEYKSYCGKHR). Cys-98, Cys-101, Cys-110, Cys-115, His-120, Cys-123, Cys-141, His-144, Cys-159, Cys-162, Cys-178, Cys-179, His-185, Cys-188, Cys-203, Cys-206, Cys-247, Cys-252, Cys-272, Cys-275, His-281, Cys-284, Cys-296, and Cys-299 together coordinate Zn(2+). Residues 150-306 (IHQRSFGESC…NECLPASTED (157 aa)) are required for interaction with ubiquitinated UBE2D2. An RING-type; degenerate zinc finger spans residues 159–207 (CVLCCEDLSRASVENIRSPCCSQAIYHRKCIQKYAHTSAKHFFKCPQCN). A required for association with and ubiquitination of H3 region spans residues 243–300 (RYQHCDAPICLYEQGRDSFEDEGRWRLILCATCGSHGTHRDCSSLRPNSKKWECNECL). Residues 352–367 (EKPESSSGSSCQSWRS) are compositionally biased toward low complexity. The segment at 352–380 (EKPESSSGSSCQSWRSKGIKVTKDCKKSK) is disordered.

Interacts with MEF2C; the interaction promotes MEF2C binding to its transcription targets. Interacts with GATA4; the interaction promotes GATA4 binding to its transcription targets. Interacts with UBE2D2; the interaction inhibits cleavage of PHF7 and promotes association of the complex with the nucleosome core particle.

The protein localises to the nucleus. It catalyses the reaction S-ubiquitinyl-[E2 ubiquitin-conjugating enzyme]-L-cysteine + [acceptor protein]-L-lysine = [E2 ubiquitin-conjugating enzyme]-L-cysteine + N(6)-ubiquitinyl-[acceptor protein]-L-lysine.. Its pathway is protein modification; protein ubiquitination. E3 ubiquitin-protein ligase which ubiquitinates histone H3 at 'Lys-14'. Required for male fertility, via inhibition of SPOP-mediated BRDT degradation when in the presence of acetylated histone H4 in early condensing spermatids. Stabilization of BRDT allows it to facilitate histone removal in early condensing spermatids and promote the progression of histone-to-protamine exchange. Promotes the expression of steroidogenesis proteins in the testes, and as a result plays a role in maintaining testosterone levels and repressing osteoclastogenesis. Promotes transcription of cardiac enhancer genes by facilitating binding of cardiac transcription factors such as MEF2C and GATA4 to target gene promoters. Ubiquitinates histone H4. Ubiquitinates histone H2A and H3 as part of the nucleosome core particle. The sequence is that of E3 ubiquitin-protein ligase PHF7 from Rattus norvegicus (Rat).